The sequence spans 169 residues: MSEQKQDVAATEEQQPVLQIQRIYVKDVSFEAPNLPHIFQQEWKPKLGFDLSTETTQVGDNLYEVVLNISVETTLEDSGDVAFICEVKQAGVFTISGLEDVQMAHCLTSQCPNMLFPYARELVSNLVNRGTFPALNLSPVNFDALFVEYMNRQQAENAEEKSEEEQTKH.

It belongs to the SecB family. In terms of assembly, homotetramer, a dimer of dimers. One homotetramer interacts with 1 SecA dimer.

The protein localises to the cytoplasm. Its function is as follows. One of the proteins required for the normal export of preproteins out of the cell cytoplasm. It is a molecular chaperone that binds to a subset of precursor proteins, maintaining them in a translocation-competent state. It also specifically binds to its receptor SecA. The chain is Protein-export protein SecB from Haemophilus influenzae (strain PittEE).